We begin with the raw amino-acid sequence, 1026 residues long: Multidrug resistance protein MdtC (1026 aa).

11 consecutive transmembrane segments (helical) span residues 15 to 35, 333 to 353, 360 to 380, 387 to 407, 431 to 451, 463 to 483, 528 to 548, 853 to 873, 897 to 917, 953 to 973, and 984 to 1004; these read ILIAAAITLCGILGFRLLPVA, EVEETLAISVALVILVVFLFL, LIPAVAVPVSLIGTFAAMYLC, LSLMALTIATGFVVDDAIVVL, VGFTVISMSLSLVAVFLPLLL, FAVTLSVAIGISLVVSLTLTP, LVGVVFLGTVALNIWLYIAIP, LILIVAAIATVYIVLGILYES, LFNAPFSLIALIGIMLLIGIV, PIMMTTLAALFGALPLVLSDG, and ITIVGGLVMSQLLTLYTTPVV.

It belongs to the resistance-nodulation-cell division (RND) (TC 2.A.6) family. MdtC subfamily. As to quaternary structure, part of a tripartite efflux system composed of MdtA, MdtB and MdtC. MdtC forms a heteromultimer with MdtB.

Its subcellular location is the cell inner membrane. The sequence is that of Multidrug resistance protein MdtC from Salmonella paratyphi B (strain ATCC BAA-1250 / SPB7).